Consider the following 214-residue polypeptide: GTP-binding nuclear protein GSP1/Ran (214 aa).

Residues 4-168 (EVAAFKLVLV…LWLARKLAGN (165 aa)) enclose the Small GTPase Ran-type domain. Residue 15–22 (DGGTGKTT) participates in GTP binding. Residues 34 to 42 (NRYNATLGV) are switch-I. GTP contacts are provided by residues Gly65, 119–122 (NKVD), and 147–149 (SAK). Positions 65–81 (GQEKFGGLRDGYYINGQ) are switch-II.

This sequence belongs to the small GTPase superfamily. Ran family. Found in a nuclear export complex with RanGTP, exportin and pre-miRNA.

Its subcellular location is the nucleus. Its function is as follows. GTP-binding protein involved in nucleocytoplasmic transport. Required for the import of protein into the nucleus and also for RNA export. Involved in chromatin condensation and control of cell cycle. The polypeptide is GTP-binding nuclear protein GSP1/Ran (GSP1) (Yarrowia lipolytica (strain CLIB 122 / E 150) (Yeast)).